We begin with the raw amino-acid sequence, 921 residues long: Ribosome-releasing factor 2, mitochondrial (921 aa).

The N-terminal 55 residues, 1 to 55, are a transit peptide targeting the mitochondrion; the sequence is MVSALLLRARQNGRAARCLDYPKVKCWALASLPKSSLEKPGFSQVRRFSVFHPQS. One can recognise a tr-type G domain in the interval 60 to 368; sequence DLTRNIGIIA…SVVDLLPSPQ (309 aa). GTP is bound by residues 69–76, 152–156, and 206–209; these read AHIDAGKT, DTPGH, and NKMD.

It belongs to the TRAFAC class translation factor GTPase superfamily. Classic translation factor GTPase family. EF-G/EF-2 subfamily.

The protein localises to the mitochondrion. Functionally, mitochondrial GTPase that mediates the disassembly of ribosomes from messenger RNA at the termination of mitochondrial protein biosynthesis. Not involved in the GTP-dependent ribosomal translocation step during translation elongation. The polypeptide is Ribosome-releasing factor 2, mitochondrial (mef2) (Emericella nidulans (strain FGSC A4 / ATCC 38163 / CBS 112.46 / NRRL 194 / M139) (Aspergillus nidulans)).